A 268-amino-acid chain; its full sequence is Undecaprenyl-diphosphatase 1 (268 aa).

Transmembrane regions (helical) follow at residues 5-25, 43-63, 84-104, 107-127, 184-204, 218-238, and 247-267; these read SIISALLLGIIEGLTEFIPVS, GNTFAVLIQLGAILAILLVYF, LAVLVAFLPAAVIGALAHDFI, VLFETPMLICVVLIIGGFILL, AAEFSFFLAMPTMLGAFVLDL, LIAVGFVAAFVSGLFVVRSLL, and APFAWWRIVIGALGLVALLVI.

It belongs to the UppP family.

It is found in the cell inner membrane. The enzyme catalyses di-trans,octa-cis-undecaprenyl diphosphate + H2O = di-trans,octa-cis-undecaprenyl phosphate + phosphate + H(+). In terms of biological role, catalyzes the dephosphorylation of undecaprenyl diphosphate (UPP). Confers resistance to bacitracin. The sequence is that of Undecaprenyl-diphosphatase 1 from Agrobacterium fabrum (strain C58 / ATCC 33970) (Agrobacterium tumefaciens (strain C58)).